Consider the following 140-residue polypeptide: MRSFVTNNDIPVGYVTPKFPSLYWPINNSKYNTAFLYYISDIWKFSLYWTLIFNGAFYVTAGVYASLTHRKKAGSVWIFVMYVLYGGVQGLTTGTVMGFLIGAIYRSGLFSMSTWVPLCCAVVQILFDVVLSYSMVGSVM.

Asparagine 27 carries an N-linked (GlcNAc...) asparagine glycan. The next 3 membrane-spanning stretches (helical) occupy residues 45–65, 76–96, and 116–136; these read FSLYWTLIFNGAFYVTAGVYA, VWIFVMYVLYGGVQGLTTGTV, and VPLCCAVVQILFDVVLSYSMV.

The protein belongs to the TMEM170 family.

It localises to the membrane. This is an uncharacterized protein from Saccharomyces cerevisiae (strain ATCC 204508 / S288c) (Baker's yeast).